The chain runs to 293 residues: Putative ABC transporter ATP-binding protein AF_0731 (293 aa).

In terms of domain architecture, ABC transporter spans 2–236 (IEAVDLHFCY…RKLGIRSFSL (235 aa)). 34 to 41 (GRNGAGKT) is a binding site for ATP.

It belongs to the ABC transporter superfamily.

The protein resides in the cell membrane. Its function is as follows. Probably part of an ABC transporter complex. Responsible for energy coupling to the transport system. The sequence is that of Putative ABC transporter ATP-binding protein AF_0731 from Archaeoglobus fulgidus (strain ATCC 49558 / DSM 4304 / JCM 9628 / NBRC 100126 / VC-16).